Consider the following 576-residue polypeptide: Probable lysosomal cobalamin transporter (576 aa).

10 helical membrane passes run 8–28 (LIWA…SVFI), 40–60 (VVTF…LLLP), 98–118 (YLLY…VYFW), 145–165 (TISF…VPVA), 188–208 (VLTF…ILYT), 312–332 (LLGG…MLLT), 347–367 (GYIL…VQSA), 377–397 (LTVV…TIGI), 419–439 (LTTA…PMLV), and 503–523 (FFGT…LLVL). Residues 549-576 (RLLTSSARGVGDTYQSVGGRNNFSTRAG) are disordered. The segment covering 561–576 (TYQSVGGRNNFSTRAG) has biased composition (polar residues). Residue N570 is glycosylated (N-linked (GlcNAc...) asparagine).

It belongs to the LIMR family. LMBRD1 subfamily.

The protein resides in the lysosome membrane. Functionally, probable lysosomal cobalamin transporter. Required to export cobalamin from lysosomes allowing its conversion to cofactors. In Aspergillus niger (strain ATCC MYA-4892 / CBS 513.88 / FGSC A1513), this protein is Probable lysosomal cobalamin transporter.